The chain runs to 462 residues: Glutamate decarboxylase alpha (462 aa).

N6-(pyridoxal phosphate)lysine is present on K273.

This sequence belongs to the group II decarboxylase family. It depends on pyridoxal 5'-phosphate as a cofactor.

It catalyses the reaction L-glutamate + H(+) = 4-aminobutanoate + CO2. Its function is as follows. Converts internalized glutamate to GABA and increases the internal pH. Involved in glutamate-dependent acid resistance in gastric fluid. This is Glutamate decarboxylase alpha (gadA) from Listeria monocytogenes serovar 1/2a (strain ATCC BAA-679 / EGD-e).